The primary structure comprises 341 residues: N-(sulfonatooxy)alkenimidothioic acid sulfate-lyase (epithionitrile-forming) (341 aa).

The tract at residues 1–24 (MAPTLQGQWIKVGQKGGTGPGPRS) is disordered. 4 Kelch repeats span residues 34 to 82 (KLYS…VRMV), 87 to 133 (KIYI…FHSM), 139 to 194 (HVYV…VVQG), and 203 to 249 (ATSI…AHAV). Positions 46, 94, 129, 130, 157, 186, 211, and 244 each coordinate a (Z)-N-(sulfonatooxy)alkanimidothioate. Arginine 94 acts as the Proton donor in catalysis. The active-site Proton donor is the arginine 157. Residues glutamate 260, aspartate 264, and histidine 268 each coordinate Fe(2+). Tryptophan 303 is an a (Z)-N-(sulfonatooxy)alkanimidothioate binding site.

In terms of assembly, homodimer. Interacts with WRKY53. Fe(2+) serves as cofactor. Expressed in epidermal cells of all above-ground organs except the anthers, in cambial cells of leaf and stem vascular bundles, and in glucosinolates rich S-cells found in stems just below the inflorescence. Absent from roots.

Its subcellular location is the cytoplasm. It is found in the nucleus. The catalysed reaction is a (Z)-N-(sulfonatooxy)alkenimidothioate = an epithionitrile + sulfate. It catalyses the reaction a (Z)-N-(sulfonatooxy)alkanimidothioate = a nitrile + sulfur + sulfate. It carries out the reaction (Z)-(indol-3-yl)-N-(sulfonatooxy)methanimidothioate = (indol-3-yl)acetonitrile + sulfur + sulfate. Not dependent on the presence of Fe(2+) although supplemental Fe(2+) increases nitriles formation. In terms of biological role, specifier protein that contributes to constitutive and herbivore-induced simple nitrile formation. Converts glucosinolates both to epithionitriles and to simple nitriles in the presence of myrosinase. Promotes the formation of epithionitriles after hydrolysis of alkenylglucosinolates containing a terminal double bond. Mediates indol-3-ylacetonitrile (IACN) production from indol-3-ylmethylglucosinolate (glucobrassicin). Triggers the production of 3,4-epithiobutylnitrile from 2-propenylisothiocyanate, product of 2-propenylglucosinolate (sinigrin) catalysis by myrosinase. Seems inactive toward benzylglucosinolate (glucotropaeolin). Acts as a negative regulator of senescence. The polypeptide is N-(sulfonatooxy)alkenimidothioic acid sulfate-lyase (epithionitrile-forming) (Arabidopsis thaliana (Mouse-ear cress)).